A 311-amino-acid chain; its full sequence is MKNEKLPQFQPHFLAPKYWLFWLGVAIWRSILCLPYPILRHIGHGFGWLFSHLKVGERRAAIARRNLELCFPDMPENEREVILQENLRSVGMAIIETGMAWFWSDSRIKKWSKVEGLHYLKENQKDGIVLVGVHFLTLELGARIIGLHHPGIGVYRPNDNPLLDWLQTQGRLRSNKDMLDRKDLRGMIKALRHEETIWYAPDHDYGRKNAVFVPFFAVPDTCTTTGSYYLLKSSQNSKVIPFAPLRNKDGSGYTVSISAPVDFTDLQDETAIAARMNQIVEKEIMKDITIYMWLHRRFKTRPDEKTPSLYD.

A helical membrane pass occupies residues 19–39 (WLFWLGVAIWRSILCLPYPIL). An HXXXXD motif motif is present at residues 134 to 139 (HFLTLE).

Belongs to the LpxL/LpxM/LpxP family.

Its subcellular location is the cell inner membrane. It carries out the reaction an alpha-Kdo-(2-&gt;4)-alpha-Kdo-(2-&gt;6)-lipid IVA + a fatty acyl-[ACP] = an alpha-Kdo-(2-&gt;4)-alpha-Kdo-(2-&gt;6)-(acyl)-lipid IVA + holo-[ACP]. It functions in the pathway glycolipid biosynthesis; KDO(2)-lipid A biosynthesis; KDO(2)-lipid A from CMP-3-deoxy-D-manno-octulosonate and lipid IV(A): step 3/4. It participates in bacterial outer membrane biogenesis; lipopolysaccharide biosynthesis. Functionally, catalyzes the transfer of an acyl chain from an acyl-[acyl-carrier-protein] (ACP) to a Kdo(2)-lipid IV(A) to form a Kdo(2)-(acyl)-lipid IV(A). In Haemophilus influenzae (strain ATCC 51907 / DSM 11121 / KW20 / Rd), this protein is Lipid A biosynthesis acyltransferase.